Consider the following 612-residue polypeptide: Transcription factor Sp2 (612 aa).

A Phosphoserine modification is found at Ser-78. Disordered stretches follow at residues 166-195 (TTPS…PVQS) and 226-250 (GPAQ…RKKS). The span at 184–195 (QKSSTTTTPVQS) shows a compositional bias: polar residues. The 9aaTAD; inactive signature appears at 360 to 368 (GEVQTVLVQ). 3 consecutive C2H2-type zinc fingers follow at residues 524–548 (HVCH…VRLH), 554–578 (FVCN…ARTH), and 584–606 (FECA…YKTH).

This sequence belongs to the Sp1 C2H2-type zinc-finger protein family.

It is found in the nucleus. Its function is as follows. Binds to GC box promoters elements and selectively activates mRNA synthesis from genes that contain functional recognition sites. The sequence is that of Transcription factor Sp2 (Sp2) from Mus musculus (Mouse).